The chain runs to 334 residues: Holliday junction branch migration complex subunit RuvB (334 aa).

The large ATPase domain (RuvB-L) stretch occupies residues 4–184 (ADRLIQPQIQ…FGIPLRLEFY (181 aa)). Residues Arg-24, Gly-65, Lys-68, Thr-69, Thr-70, 131 to 133 (EDY), Arg-174, Tyr-184, and Arg-221 contribute to the ATP site. Residue Thr-69 participates in Mg(2+) binding. Positions 185–255 (NIKDLSTIVT…VAEHALDLLD (71 aa)) are small ATPAse domain (RuvB-S). Positions 258–334 (SEGFDYMDRK…YQHFELIKPE (77 aa)) are head domain (RuvB-H). Positions 294, 313, and 318 each coordinate DNA.

The protein belongs to the RuvB family. As to quaternary structure, homohexamer. Forms an RuvA(8)-RuvB(12)-Holliday junction (HJ) complex. HJ DNA is sandwiched between 2 RuvA tetramers; dsDNA enters through RuvA and exits via RuvB. An RuvB hexamer assembles on each DNA strand where it exits the tetramer. Each RuvB hexamer is contacted by two RuvA subunits (via domain III) on 2 adjacent RuvB subunits; this complex drives branch migration. In the full resolvosome a probable DNA-RuvA(4)-RuvB(12)-RuvC(2) complex forms which resolves the HJ.

The protein localises to the cytoplasm. The enzyme catalyses ATP + H2O = ADP + phosphate + H(+). Its function is as follows. The RuvA-RuvB-RuvC complex processes Holliday junction (HJ) DNA during genetic recombination and DNA repair, while the RuvA-RuvB complex plays an important role in the rescue of blocked DNA replication forks via replication fork reversal (RFR). RuvA specifically binds to HJ cruciform DNA, conferring on it an open structure. The RuvB hexamer acts as an ATP-dependent pump, pulling dsDNA into and through the RuvAB complex. RuvB forms 2 homohexamers on either side of HJ DNA bound by 1 or 2 RuvA tetramers; 4 subunits per hexamer contact DNA at a time. Coordinated motions by a converter formed by DNA-disengaged RuvB subunits stimulates ATP hydrolysis and nucleotide exchange. Immobilization of the converter enables RuvB to convert the ATP-contained energy into a lever motion, pulling 2 nucleotides of DNA out of the RuvA tetramer per ATP hydrolyzed, thus driving DNA branch migration. The RuvB motors rotate together with the DNA substrate, which together with the progressing nucleotide cycle form the mechanistic basis for DNA recombination by continuous HJ branch migration. Branch migration allows RuvC to scan DNA until it finds its consensus sequence, where it cleaves and resolves cruciform DNA. This Shewanella baltica (strain OS195) protein is Holliday junction branch migration complex subunit RuvB.